The following is a 144-amino-acid chain: Noggin (144 aa).

Residues 1–4 form the signal peptide; sequence GGGG. 4 disulfides stabilise this stretch: Cys67-Cys104, Cys90-Cys140, Cys96-Cys142, and Cys119-Cys127.

The protein belongs to the noggin family. Homodimer. Interacts with GDF5; inhibits chondrocyte differentiation. Prominently expressed in the CNS. High levels found in mitral and tufted cells in the olfactory bulb, piriform cortex of the brain and Purkinje cells in the cerebellum. Low level expression seen in the lung, skeletal muscle and skin.

The protein resides in the secreted. In terms of biological role, essential for cartilage morphogenesis and joint formation. Inhibitor of bone morphogenetic proteins (BMP) signaling which is required for growth and patterning of the neural tube and somite. Inhibits chondrocyte differentiation through its interaction with GDF5 and, probably, GDF6. The sequence is that of Noggin (Nog) from Rattus norvegicus (Rat).